The primary structure comprises 375 residues: tRNA-specific 2-thiouridylase MnmA (375 aa).

Residues 12 to 19 (GMSGGVDS) and methionine 38 each bind ATP. The tract at residues 98–100 (NPD) is interaction with target base in tRNA. Residue cysteine 103 is the Nucleophile of the active site. A disulfide bridge connects residues cysteine 103 and cysteine 200. Position 127 (glycine 127) interacts with ATP. An interaction with tRNA region spans residues 150–152 (KDQ). Cysteine 200 (cysteine persulfide intermediate) is an active-site residue. The segment at 312–313 (RY) is interaction with tRNA.

It belongs to the MnmA/TRMU family.

It localises to the cytoplasm. It catalyses the reaction S-sulfanyl-L-cysteinyl-[protein] + uridine(34) in tRNA + AH2 + ATP = 2-thiouridine(34) in tRNA + L-cysteinyl-[protein] + A + AMP + diphosphate + H(+). In terms of biological role, catalyzes the 2-thiolation of uridine at the wobble position (U34) of tRNA, leading to the formation of s(2)U34. This chain is tRNA-specific 2-thiouridylase MnmA, found in Lactobacillus helveticus (strain DPC 4571).